The sequence spans 186 residues: Large ribosomal subunit protein uL22 (186 aa).

This sequence belongs to the universal ribosomal protein uL22 family. Component of the large ribosomal subunit (LSU). Mature N.crassa ribosomes consist of a small (40S) and a large (60S) subunit. The 40S small subunit contains 1 molecule of ribosomal RNA (18S rRNA) and at least 32 different proteins. The large 60S subunit contains 3 rRNA molecules (26S, 5.8S and 5S rRNA) and at least 42 different proteins.

The protein localises to the cytoplasm. Component of the ribosome, a large ribonucleoprotein complex responsible for the synthesis of proteins in the cell. The small ribosomal subunit (SSU) binds messenger RNAs (mRNAs) and translates the encoded message by selecting cognate aminoacyl-transfer RNA (tRNA) molecules. The large subunit (LSU) contains the ribosomal catalytic site termed the peptidyl transferase center (PTC), which catalyzes the formation of peptide bonds, thereby polymerizing the amino acids delivered by tRNAs into a polypeptide chain. The nascent polypeptides leave the ribosome through a tunnel in the LSU and interact with protein factors that function in enzymatic processing, targeting, and the membrane insertion of nascent chains at the exit of the ribosomal tunnel. The polypeptide is Large ribosomal subunit protein uL22 (rpl-17) (Neurospora crassa (strain ATCC 24698 / 74-OR23-1A / CBS 708.71 / DSM 1257 / FGSC 987)).